The following is a 195-amino-acid chain: Probable molybdenum cofactor guanylyltransferase (195 aa).

Residues 6–8 (LAG), Lys18, Asp67, and Asp93 contribute to the GTP site. Position 93 (Asp93) interacts with Mg(2+).

This sequence belongs to the MobA family. Mg(2+) serves as cofactor.

It is found in the cytoplasm. The enzyme catalyses Mo-molybdopterin + GTP + H(+) = Mo-molybdopterin guanine dinucleotide + diphosphate. In terms of biological role, transfers a GMP moiety from GTP to Mo-molybdopterin (Mo-MPT) cofactor (Moco or molybdenum cofactor) to form Mo-molybdopterin guanine dinucleotide (Mo-MGD) cofactor. This chain is Probable molybdenum cofactor guanylyltransferase, found in Thermococcus sibiricus (strain DSM 12597 / MM 739).